The sequence spans 193 residues: MNQPPMLDIFRSTGALLEGHFKLTSGRHSNTYFQCAKVLQHPEHLSAVCHKIAAHFSQKGVDTVISPAIGGIVAGTETGRQLGVKTIFAERKDGRMTIRRGFSVAPGEKVLVIEDVITTGGSVQEVIELLKNAGALIIGVGCVVDRSNGKVRLTDDQYAVLSMEVVSYAPEECPLCKEGMPIDAPGSRANQQP.

Residue 114–122 (EDVITTGGS) participates in 5-phospho-alpha-D-ribose 1-diphosphate binding. Residues T118 and R146 each coordinate orotate.

Belongs to the purine/pyrimidine phosphoribosyltransferase family. PyrE subfamily. As to quaternary structure, homodimer. Mg(2+) serves as cofactor.

The catalysed reaction is orotidine 5'-phosphate + diphosphate = orotate + 5-phospho-alpha-D-ribose 1-diphosphate. It functions in the pathway pyrimidine metabolism; UMP biosynthesis via de novo pathway; UMP from orotate: step 1/2. Its function is as follows. Catalyzes the transfer of a ribosyl phosphate group from 5-phosphoribose 1-diphosphate to orotate, leading to the formation of orotidine monophosphate (OMP). The polypeptide is Orotate phosphoribosyltransferase (Chlorobium phaeobacteroides (strain DSM 266 / SMG 266 / 2430)).